The primary structure comprises 369 residues: Muscleblind-like protein 1 (369 aa).

4 consecutive C3H1-type zinc fingers follow at residues tryptophan 13–lysine 41, asparagine 47–proline 73, threonine 178–aspartate 206, and aspartate 214–alanine 240.

This sequence belongs to the muscleblind family.

It localises to the nucleus. The protein localises to the cytoplasm. Its subcellular location is the cytoplasmic granule. Involved in pre-mRNA alternative splicing regulation. Binds to CUG triplet repeat in RNA. The polypeptide is Muscleblind-like protein 1 (MBNL1) (Gallus gallus (Chicken)).